The chain runs to 194 residues: uncharacterized protein (194 aa).

Positions 45–138 (QLLGVPEQHR…AGPPRGDWGV (94 aa)) are disordered. Phosphoserine is present on residues Ser-69 and Ser-76. The span at 97–106 (PPLPPPPVLP) shows a compositional bias: pro residues. The span at 107–116 (GPGEELPGAR) shows a compositional bias: low complexity. Positions 117–128 (LPGGGGDDGAGR) are enriched in gly residues.

This is an uncharacterized protein from Homo sapiens (Human).